The following is a 442-amino-acid chain: tRNA-2-methylthio-N(6)-dimethylallyladenosine synthase (442 aa).

The MTTase N-terminal domain occupies 3 to 120 (NKLYIRTFGC…LPNMLNDALN (118 aa)). [4Fe-4S] cluster is bound by residues Cys12, Cys49, Cys83, Cys157, Cys161, and Cys164. The Radical SAM core domain maps to 143–375 (RTNSVTAFVS…QKTINNNTEH (233 aa)). Positions 378 to 440 (QLMIGSIQKV…GNSLMGDLLT (63 aa)) constitute a TRAM domain.

The protein belongs to the methylthiotransferase family. MiaB subfamily. Monomer. Requires [4Fe-4S] cluster as cofactor.

It is found in the cytoplasm. The catalysed reaction is N(6)-dimethylallyladenosine(37) in tRNA + (sulfur carrier)-SH + AH2 + 2 S-adenosyl-L-methionine = 2-methylsulfanyl-N(6)-dimethylallyladenosine(37) in tRNA + (sulfur carrier)-H + 5'-deoxyadenosine + L-methionine + A + S-adenosyl-L-homocysteine + 2 H(+). Functionally, catalyzes the methylthiolation of N6-(dimethylallyl)adenosine (i(6)A), leading to the formation of 2-methylthio-N6-(dimethylallyl)adenosine (ms(2)i(6)A) at position 37 in tRNAs that read codons beginning with uridine. The polypeptide is tRNA-2-methylthio-N(6)-dimethylallyladenosine synthase (Vesicomyosocius okutanii subsp. Calyptogena okutanii (strain HA)).